The following is a 336-amino-acid chain: Glyceraldehyde-3-phosphate dehydrogenase (336 aa).

Residues 12–13 (RI), D35, R79, and S121 contribute to the NAD(+) site. Residues 152 to 154 (SCT) and T183 each bind D-glyceraldehyde 3-phosphate. C153 functions as the Nucleophile in the catalytic mechanism. N184 serves as a coordination point for NAD(+). Residues R198, 211 to 212 (TG), and R234 contribute to the D-glyceraldehyde 3-phosphate site. An NAD(+)-binding site is contributed by N317.

Belongs to the glyceraldehyde-3-phosphate dehydrogenase family. As to quaternary structure, homotetramer.

The protein localises to the cytoplasm. The catalysed reaction is D-glyceraldehyde 3-phosphate + phosphate + NAD(+) = (2R)-3-phospho-glyceroyl phosphate + NADH + H(+). It participates in carbohydrate degradation; glycolysis; pyruvate from D-glyceraldehyde 3-phosphate: step 1/5. With respect to regulation, resistant to pentalenolactone. Its function is as follows. Catalyzes the oxidative phosphorylation of glyceraldehyde 3-phosphate (G3P) to 1,3-bisphosphoglycerate (BPG) using the cofactor NAD. The first reaction step involves the formation of a hemiacetal intermediate between G3P and a cysteine residue, and this hemiacetal intermediate is then oxidized to a thioester, with concomitant reduction of NAD to NADH. The reduced NADH is then exchanged with the second NAD, and the thioester is attacked by a nucleophilic inorganic phosphate to produce BPG. The sequence is that of Glyceraldehyde-3-phosphate dehydrogenase (gap) from Streptomyces coelicolor (strain ATCC BAA-471 / A3(2) / M145).